A 106-amino-acid polypeptide reads, in one-letter code: uncharacterized protein (106 aa).

The signal sequence occupies residues 1–25; that stretch reads MSVIKKNIPAIGLCICAFFIHSAVG.

This sequence to the N-terminal of the FimA/PapA family of fimbria proteins.

This is an uncharacterized protein from Salmonella typhi.